The primary structure comprises 417 residues: MLKKEDRIFTNLHGEQSHDLKSSKKLGDWDNTKALLNKGKEWIIEEVKKSGLRGRGGAGFSTGTKWSFMPKESKKPSYLVVNADESEPGTCKDRDILRYEPHKLIEGCLLASFAIGANSCYIYIRGEFYNEASNIQRALDEAYKDGLIGKNACGSGFNCDIYLHRGAGAYICGEETALLESLEGKKGMPRLKPPFPAGFGLYGCPTTINNVESIAVVPTILRRGASWFASIGKPNNTGTKIFCISGHVNKPCNVEEAMGIPLKEIIEKHAGGVRGGWDNLKAIIPGGSSVPLLPKSLCETADMDFDSLKAAGSSLGTGGIIVMDKSTDIIYAIARLSKFYMHESCGQCTPCREGTGWMWRVMMRLVKGDAKKSEIDQLLEVTKEIEGHTICALGDAAAWPIQGLIKHFRNEIESRIQ.

Residue G54–G63 coordinates NAD(+). An FMN-binding site is contributed by G166–S213. Residues C345, C348, C351, and C391 each coordinate [4Fe-4S] cluster.

The protein belongs to the complex I 51 kDa subunit family. Requires FMN as cofactor. It depends on [4Fe-4S] cluster as a cofactor.

It carries out the reaction a quinone + NADH + 5 H(+)(in) = a quinol + NAD(+) + 4 H(+)(out). Its function is as follows. NDH-1 shuttles electrons from NADH, via FMN and iron-sulfur (Fe-S) centers, to quinones in the respiratory chain. Couples the redox reaction to proton translocation (for every two electrons transferred, four hydrogen ions are translocated across the cytoplasmic membrane), and thus conserves the redox energy in a proton gradient. This chain is NADH-quinone oxidoreductase subunit F (nuoF), found in Rickettsia bellii (strain OSU 85-389).